The following is a 337-amino-acid chain: Low-density lipoprotein receptor class A domain-containing protein 3 (337 aa).

Positions 1–13 are cleaved as a signal peptide; that stretch reads MWLLYLILGSVES. At 14–169 the chain is on the extracellular side; that stretch reads QLLPGNNHTT…NQLLYYPSIT (156 aa). A glycan (N-linked (GlcNAc...) asparagine) is linked at N20. LDL-receptor class A domains are found at residues 24-61, 66-103, and 108-144; these read ECNIPGNFMCSNGRCIPGGWQCDGNPDCFDESDEKECP, RCGPNFFPCTSGIHCIIARFQCNGFEDCPDGSDEENCT, and LCSNSRFHCKNHLCIDKSFVCDGQNNCLDNSDEEHCH. 9 disulfides stabilise this stretch: C25/C38, C33/C51, C45/C60, C67/C80, C74/C93, C87/C102, C109/C121, C116/C134, and C128/C143. N-linked (GlcNAc...) asparagine glycosylation is present at N101. The chain crosses the membrane as a helical span at residues 170 to 190; it reads YTIIGSSVIFVLVVALLALVL. The Cytoplasmic portion of the chain corresponds to 191 to 337; that stretch reads HHQRKRNLMS…DDLPSTEVDV (147 aa). Over residues 243–253 the composition is skewed to polar residues; sequence QQPVSVESPPS. The disordered stretch occupies residues 243–337; the sequence is QQPVSVESPP…DDLPSTEVDV (95 aa). Residues 291-303 show a composition bias toward low complexity; it reads RSRTGSSASAGST.

Belongs to the LDLR family.

The protein resides in the cell membrane. The sequence is that of Low-density lipoprotein receptor class A domain-containing protein 3 from Xenopus tropicalis (Western clawed frog).